Reading from the N-terminus, the 256-residue chain is MSFEDAVATGSTKVGTDATGKMTHSYRSDVNEFFPDAQDLDTVLRTAVGALSPVVKIERGFAIVRTDAEPSAPDFSDAATRERVFAHMARVERGTIERFLEEEAHTFSTRAKQGGFTAAAQSLNLDVHTSRSFPINFGNVDVLPALPRQSDPPLARIAYDEKFFSTAFALLPGQVSDPLILDSSVVLLQLHEEKSVDESVLATTGDSYAHHVRTWYPGYPLALLNTAKMPWAQESVVDTILAHPSFKDTFDNIFRR.

This is an uncharacterized protein from Treponema pallidum (strain Nichols).